A 384-amino-acid polypeptide reads, in one-letter code: Polyketide synthase BAS (384 aa).

The active-site Nucleophile and monoketide coumarate intermediate is C157. C157 carries the post-translational modification S-(4-hydroxycinnamyl)cysteine.

The protein belongs to the thiolase-like superfamily. Chalcone/stilbene synthases family. As to quaternary structure, homodimer.

The enzyme catalyses 4-coumaroyl-CoA + malonyl-CoA + H2O + H(+) = 4-hydroxybenzalacetone + 2 CO2 + 2 CoA. Its pathway is secondary metabolite biosynthesis; flavonoid biosynthesis. Its function is as follows. Polyketide synthase producing 4-hydroxybenzalacetone. Can use p-coumaryl-CoA as substrate but does not accept hexanoyl-CoA, isobutyryl-CoA, isovaleryl-CoA, and acetyl-CoA as a substrates. Catalyzes the initial key reaction step in the biosynthesis of phenylbutanoids. This Rheum palmatum (Chinese rhubarb) protein is Polyketide synthase BAS (BAS).